Here is a 292-residue protein sequence, read N- to C-terminus: 4-hydroxy-tetrahydrodipicolinate synthase (292 aa).

Thr-45 lines the pyruvate pocket. Catalysis depends on Tyr-133, which acts as the Proton donor/acceptor. Lys-161 acts as the Schiff-base intermediate with substrate in catalysis. Ile-203 is a pyruvate binding site.

The protein belongs to the DapA family. As to quaternary structure, homotetramer; dimer of dimers.

The protein resides in the cytoplasm. It catalyses the reaction L-aspartate 4-semialdehyde + pyruvate = (2S,4S)-4-hydroxy-2,3,4,5-tetrahydrodipicolinate + H2O + H(+). It functions in the pathway amino-acid biosynthesis; L-lysine biosynthesis via DAP pathway; (S)-tetrahydrodipicolinate from L-aspartate: step 3/4. Catalyzes the condensation of (S)-aspartate-beta-semialdehyde [(S)-ASA] and pyruvate to 4-hydroxy-tetrahydrodipicolinate (HTPA). The chain is 4-hydroxy-tetrahydrodipicolinate synthase from Klebsiella pneumoniae subsp. pneumoniae (strain ATCC 700721 / MGH 78578).